The chain runs to 249 residues: Small ribosomal subunit protein eS6 (249 aa).

Positions 223 to 238 (LRQRDHSKKHTQKVHA) are enriched in basic residues. The segment at 223–249 (LRQRDHSKKHTQKVHAQRAEVAAFQKK) is disordered.

Belongs to the eukaryotic ribosomal protein eS6 family. Component of the small ribosomal subunit. Part of the small subunit (SSU) processome, composed of more than 70 proteins and the RNA chaperone small nucleolar RNA (snoRNA) U3. Post-translationally, ribosomal protein S6 is the major substrate of protein kinases in eukaryote ribosomes.

The protein localises to the cytoplasm. Its subcellular location is the nucleus. It localises to the nucleolus. Its function is as follows. Component of the 40S small ribosomal subunit. Plays an important role in controlling cell growth and proliferation through the selective translation of particular classes of mRNA. Part of the small subunit (SSU) processome, first precursor of the small eukaryotic ribosomal subunit. During the assembly of the SSU processome in the nucleolus, many ribosome biogenesis factors, an RNA chaperone and ribosomal proteins associate with the nascent pre-rRNA and work in concert to generate RNA folding, modifications, rearrangements and cleavage as well as targeted degradation of pre-ribosomal RNA by the RNA exosome. The polypeptide is Small ribosomal subunit protein eS6 (RPS6) (Leishmania infantum).